A 314-amino-acid polypeptide reads, in one-letter code: Hydroxyethylthiazole kinase (314 aa).

Residue methionine 70 participates in substrate binding. 2 residues coordinate ATP: arginine 145 and serine 217. Glycine 244 is a substrate binding site.

This sequence belongs to the Thz kinase family. The cofactor is Mg(2+).

The enzyme catalyses 5-(2-hydroxyethyl)-4-methylthiazole + ATP = 4-methyl-5-(2-phosphooxyethyl)-thiazole + ADP + H(+). Its pathway is cofactor biosynthesis; thiamine diphosphate biosynthesis; 4-methyl-5-(2-phosphoethyl)-thiazole from 5-(2-hydroxyethyl)-4-methylthiazole: step 1/1. In terms of biological role, catalyzes the phosphorylation of the hydroxyl group of 4-methyl-5-beta-hydroxyethylthiazole (THZ). The sequence is that of Hydroxyethylthiazole kinase from Bifidobacterium longum (strain DJO10A).